We begin with the raw amino-acid sequence, 78 residues long: Large ribosomal subunit protein bL28 (78 aa).

It belongs to the bacterial ribosomal protein bL28 family.

This chain is Large ribosomal subunit protein bL28, found in Pasteurella multocida (strain Pm70).